A 273-amino-acid polypeptide reads, in one-letter code: MSNRTVFFISDGTGITAETFGNAILAQFEISPRHVRLPFIDTVDKAHQAIRHINHTGELEGKRPIVFTTLVNMDILAVLKAQCNGMLLDMFGIFVAPLESELGIKSNHRVGRFSDASKSKAYDERIEAINFSLAHDDGQSHRDLAGSDVILVGVSRSGKTPTTLYLAMQYGLKASNYPLIPEDFERRQLPPALVPHRKKIFGLTIAPERLSQIRNERRPNSTYSSLANCRNEIHEAEAMMRREGIRWLSTTTKSIEEIATTILQEIRPERLEY.

153–160 (GVSRSGKT) contributes to the ADP binding site.

The protein belongs to the pyruvate, phosphate/water dikinase regulatory protein family. PSRP subfamily.

It catalyses the reaction [pyruvate, water dikinase] + ADP = [pyruvate, water dikinase]-phosphate + AMP + H(+). The enzyme catalyses [pyruvate, water dikinase]-phosphate + phosphate + H(+) = [pyruvate, water dikinase] + diphosphate. Its function is as follows. Bifunctional serine/threonine kinase and phosphorylase involved in the regulation of the phosphoenolpyruvate synthase (PEPS) by catalyzing its phosphorylation/dephosphorylation. The protein is Putative phosphoenolpyruvate synthase regulatory protein of Polaromonas naphthalenivorans (strain CJ2).